We begin with the raw amino-acid sequence, 249 residues long: Ribosomal RNA small subunit methyltransferase J (249 aa).

S-adenosyl-L-methionine is bound by residues 101 to 102, 117 to 118, and aspartate 171; these read RD and ER.

The protein belongs to the methyltransferase superfamily. RsmJ family.

It localises to the cytoplasm. The enzyme catalyses guanosine(1516) in 16S rRNA + S-adenosyl-L-methionine = N(2)-methylguanosine(1516) in 16S rRNA + S-adenosyl-L-homocysteine + H(+). Specifically methylates the guanosine in position 1516 of 16S rRNA. The sequence is that of Ribosomal RNA small subunit methyltransferase J from Tolumonas auensis (strain DSM 9187 / NBRC 110442 / TA 4).